The sequence spans 139 residues: Protein AC53 (139 aa).

Its subcellular location is the host cytoplasm. The protein localises to the host nucleus. In terms of biological role, plays a role in nucleocapsid assembly. The sequence is that of Protein AC53 (AC53) from Lepidoptera (butterflies and moths).